A 151-amino-acid chain; its full sequence is Superoxide dismutase [Cu-Zn] A (151 aa).

C6 is lipidated: S-palmitoyl cysteine. Residues H45, H47, and H62 each contribute to the Cu cation site. A disulfide bond links C56 and C144. Zn(2+) is bound by residues H62, H70, H79, and D82. H118 contributes to the Cu cation binding site.

Belongs to the Cu-Zn superoxide dismutase family. In terms of assembly, homodimer, and heterodimer of Superoxide dismutase [Cu-Zn] A and B. Cu cation is required as a cofactor. Requires Zn(2+) as cofactor.

Its subcellular location is the cytoplasm. The protein resides in the nucleus. It catalyses the reaction 2 superoxide + 2 H(+) = H2O2 + O2. Destroys radicals which are normally produced within the cells and which are toxic to biological systems. The chain is Superoxide dismutase [Cu-Zn] A (sod1-a) from Xenopus laevis (African clawed frog).